The following is a 650-amino-acid chain: Laccase-like multicopper oxidase 1 (650 aa).

The signal sequence occupies residues 1–20; the sequence is MLLSKLSILLAKWLSVAVYA. Plastocyanin-like domains lie at 41–151, 162–360, and 439–595; these read QVPS…IVED, ERIL…LRYN, and KPVL…VVGD. An intrachain disulfide couples C46 to C254. N-linked (GlcNAc...) asparagine glycosylation is found at N55 and N83. Positions 87, 89, 133, and 135 each coordinate Cu cation. Cu cation contacts are provided by H501, H504, H506, H576, C577, H578, and H582. N620 carries N-linked (GlcNAc...) asparagine glycosylation.

Belongs to the multicopper oxidase family. Monomer. In terms of processing, N-glycosylation Asn-55 and Asn-83 is involved in folding, conformational stability and laccase activity.

It carries out the reaction 2 2',3,4-trihydroxy-trans-chalcone + O2 + 2 H(+) = 2 3',4'-dihydroxyaurone + 2 H2O. With respect to regulation, retains almost half of its activity in presence of high salt concentrations up to 100 mM NaCl. Retains also more than 85% of its original activity in the presence of 1 mM EDTA, indicating a satisfactory resistance towards chelators, which is rare among metal-containing enzyme. The activity drops significantly in the presence of NaN(3) or SDS. Appears more active in the presence of methanol compared to ethanol, but acetone or DMSO addition severely affect remaining laccase activity. In terms of biological role, yellow laccase-like multicopper oxidase that is able to oxidize a variety of phenolic compounds including standard laccase substrates such as 2'-azino-bis(3-ethylbenzothiazoline-6-sulphonic acid) (ABTS) and 2,6-dimethoxyphenol (2,6-DMP). The existence of an ortho-hydroxy group is crucial for oxidation since pyrogallol and catechol, which contain ortho-hydroxy groups, are readily oxidized, which is not the case for resorcinol and hydroquinone, that contain meta- and para-hydroxy groups, respectively. The same is also true for the existence of a methoxy group in an ortho-position, since 2,6-DMP, guaiacol and ferulic and caffeic acids are also rather easily oxidized compared with the corresponding unsubstituted compound. Can be used for the bioconversion of 2',3,4-trihy-droxychalcone to 3',4'-dihydroxy-aurone, a bioactive aurone recently shown to possess inhibitory activity against several isoforms of the histone deacetylase complex (HDAC). This Thermothelomyces thermophilus (strain ATCC 42464 / BCRC 31852 / DSM 1799) (Sporotrichum thermophile) protein is Laccase-like multicopper oxidase 1.